We begin with the raw amino-acid sequence, 926 residues long: Alanine--tRNA ligase (926 aa).

Zn(2+) contacts are provided by H577, H581, C680, and H684.

The protein belongs to the class-II aminoacyl-tRNA synthetase family. Zn(2+) is required as a cofactor.

The protein localises to the cytoplasm. It carries out the reaction tRNA(Ala) + L-alanine + ATP = L-alanyl-tRNA(Ala) + AMP + diphosphate. In terms of biological role, catalyzes the attachment of alanine to tRNA(Ala) in a two-step reaction: alanine is first activated by ATP to form Ala-AMP and then transferred to the acceptor end of tRNA(Ala). Also edits incorrectly charged Ser-tRNA(Ala) and Gly-tRNA(Ala) via its editing domain. In Methylacidiphilum infernorum (isolate V4) (Methylokorus infernorum (strain V4)), this protein is Alanine--tRNA ligase.